We begin with the raw amino-acid sequence, 302 residues long: Nucleotide-binding protein Bcep1808_2900 (302 aa).

8 to 15 (GISGSGKS) provides a ligand contact to ATP. A GTP-binding site is contributed by 57–60 (DARS).

It belongs to the RapZ-like family.

Displays ATPase and GTPase activities. In Burkholderia vietnamiensis (strain G4 / LMG 22486) (Burkholderia cepacia (strain R1808)), this protein is Nucleotide-binding protein Bcep1808_2900.